Here is a 128-residue protein sequence, read N- to C-terminus: Ribosome-binding factor A (128 aa).

This sequence belongs to the RbfA family. In terms of assembly, monomer. Binds 30S ribosomal subunits, but not 50S ribosomal subunits or 70S ribosomes.

It is found in the cytoplasm. Functionally, one of several proteins that assist in the late maturation steps of the functional core of the 30S ribosomal subunit. Associates with free 30S ribosomal subunits (but not with 30S subunits that are part of 70S ribosomes or polysomes). Required for efficient processing of 16S rRNA. May interact with the 5'-terminal helix region of 16S rRNA. The chain is Ribosome-binding factor A from Rickettsia prowazekii (strain Madrid E).